Here is a 309-residue protein sequence, read N- to C-terminus: DnaJ protein ERDJ7 (309 aa).

Residues 1–36 form the signal peptide; the sequence is MSQVGSAGEGSNSMAAAPPPRLLLLVVLLLVPVSNA. Residues 37–130 lie on the Lumenal side of the membrane; sequence IYCEEDDCYD…YRAYYGHKTD (94 aa). The J domain occupies 43–107; it reads DCYDLLGVKQ…STRGQYDYAI (65 aa). A glycan (N-linked (GlcNAc...) asparagine) is linked at asparagine 55. Residues 131-151 traverse the membrane as a helical segment; it reads PRAVLIGLLLIISAFQYLNQF. The Cytoplasmic segment spans residues 152 to 219; that stretch reads GRYSKAIETV…GVEKPSLWRL (68 aa). The helical transmembrane segment at 220–242 threads the bilayer; it reads YGVQFILLPYSIGKVLSWKFCWF. The Lumenal segment spans residues 243 to 309; that stretch reads WRYRIKKLPY…EMRKESKRRR (67 aa).

The protein resides in the endoplasmic reticulum membrane. Functionally, may play a role in protein folding in the endoplasmic reticulum. The chain is DnaJ protein ERDJ7 from Oryza sativa subsp. japonica (Rice).